We begin with the raw amino-acid sequence, 156 residues long: SsrA-binding protein (156 aa).

This sequence belongs to the SmpB family.

The protein localises to the cytoplasm. Functionally, required for rescue of stalled ribosomes mediated by trans-translation. Binds to transfer-messenger RNA (tmRNA), required for stable association of tmRNA with ribosomes. tmRNA and SmpB together mimic tRNA shape, replacing the anticodon stem-loop with SmpB. tmRNA is encoded by the ssrA gene; the 2 termini fold to resemble tRNA(Ala) and it encodes a 'tag peptide', a short internal open reading frame. During trans-translation Ala-aminoacylated tmRNA acts like a tRNA, entering the A-site of stalled ribosomes, displacing the stalled mRNA. The ribosome then switches to translate the ORF on the tmRNA; the nascent peptide is terminated with the 'tag peptide' encoded by the tmRNA and targeted for degradation. The ribosome is freed to recommence translation, which seems to be the essential function of trans-translation. This Trichodesmium erythraeum (strain IMS101) protein is SsrA-binding protein.